The sequence spans 295 residues: Acetylglutamate kinase (295 aa).

Substrate is bound by residues 66–67 (GG), R88, and N193.

The protein belongs to the acetylglutamate kinase family. ArgB subfamily.

The protein resides in the cytoplasm. The enzyme catalyses N-acetyl-L-glutamate + ATP = N-acetyl-L-glutamyl 5-phosphate + ADP. It participates in amino-acid biosynthesis; L-arginine biosynthesis; N(2)-acetyl-L-ornithine from L-glutamate: step 2/4. Catalyzes the ATP-dependent phosphorylation of N-acetyl-L-glutamate. The sequence is that of Acetylglutamate kinase from Sinorhizobium medicae (strain WSM419) (Ensifer medicae).